The following is a 634-amino-acid chain: Probable potassium transport system protein Kup (634 aa).

Helical transmembrane passes span 21–41 (LVIG…LYTL), 58–78 (VLGI…LKYV), 110–130 (MYVV…DGVI), 147–167 (APKL…MLFL), 179–199 (AFGP…VYNM), 223–243 (WHAV…EALY), 258–278 (WQFV…ALVL), 296–316 (ALYP…QALI), 348–368 (IYVP…VIGF), 377–397 (AYGV…IIYA), 403–423 (VPAP…CAFF), and 427–447 (IIKF…LFTL).

Belongs to the HAK/KUP transporter (TC 2.A.72) family.

Its subcellular location is the cell inner membrane. The catalysed reaction is K(+)(in) + H(+)(in) = K(+)(out) + H(+)(out). Functionally, transport of potassium into the cell. Likely operates as a K(+):H(+) symporter. This Xanthomonas axonopodis pv. citri (strain 306) protein is Probable potassium transport system protein Kup.